Here is a 153-residue protein sequence, read N- to C-terminus: Ribonuclease H (153 aa).

The 142-residue stretch at 7–148 (PADLVEMWTD…ADMLANQGVA (142 aa)) folds into the RNase H type-1 domain. The Mg(2+) site is built by Asp-16, Glu-54, Asp-76, and Asp-140.

Belongs to the RNase H family. In terms of assembly, monomer. Requires Mg(2+) as cofactor.

The protein localises to the cytoplasm. The enzyme catalyses Endonucleolytic cleavage to 5'-phosphomonoester.. Functionally, endonuclease that specifically degrades the RNA of RNA-DNA hybrids. This chain is Ribonuclease H, found in Bordetella avium (strain 197N).